Reading from the N-terminus, the 147-residue chain is Echinoidin (147 aa).

One can recognise a C-type lectin domain in the interval 1–143 (GCCPTFWTSF…STRHYLICKL (143 aa)). 3 cysteine pairs are disulfide-bonded: cysteine 3-cysteine 14, cysteine 31-cysteine 141, and cysteine 116-cysteine 132. O-linked (Hex) serine glycosylation occurs at serine 38. Residues 39–41 (RGD) carry the Cell attachment site motif.

In terms of assembly, homodimer; disulfide-linked. The identity of the saccharide is not reported in PubMed:3571253, and it is unlikely to be N-acetylgalactosamine. The sugar attached to Ser-38 is represented simply as Hex. In terms of tissue distribution, coelemic fluid.

Its subcellular location is the secreted. Its function is as follows. Role in the defense system of the organism against microorganisms. This lectin is specific for Gal-GalNAc. The sequence is that of Echinoidin from Heliocidaris crassispina (Sea urchin).